The chain runs to 413 residues: F-box protein CPR1 (413 aa).

The F-box domain occupies 1 to 48 (MATIPMDIVNDIFLRLPAKTLVRCRALSKPCYHLINDPDFIESHLHRV).

In terms of assembly, part of a SCF (ASK-cullin-F-box) protein ligase complex. Interacts with SKP1A/ASK1, SPK1B/ASK2, ASK9, ASK10, ASK11, ASK13, ASK14, ASK16, ASK17, ASK18 and ASK19. Interacts with TRAF1B. Expressed in seedling, root, stem, leaves, inflorescence and silique, especially in veins and trichomes.

The protein localises to the cytoplasm. Its subcellular location is the nucleus. It participates in protein modification; protein ubiquitination. In terms of biological role, component of SCF(ASK-cullin-F-box) E3 ubiquitin ligase complexes, which may mediate the ubiquitination and subsequent proteasomal degradation of target proteins. Regulates negatively both salicylic acid (SA)-dependent and SA-independent defense signaling. This is F-box protein CPR1 (CPR1) from Arabidopsis thaliana (Mouse-ear cress).